The following is a 403-amino-acid chain: O-succinylhomoserine sulfhydrylase (403 aa).

Residue K219 is modified to N6-(pyridoxal phosphate)lysine.

It belongs to the trans-sulfuration enzymes family. MetZ subfamily. In terms of assembly, homotetramer. Pyridoxal 5'-phosphate is required as a cofactor.

The enzyme catalyses O-succinyl-L-homoserine + hydrogen sulfide = L-homocysteine + succinate. It participates in amino-acid biosynthesis; L-methionine biosynthesis via de novo pathway; L-homocysteine from O-succinyl-L-homoserine: step 1/1. Functionally, catalyzes the formation of L-homocysteine from O-succinyl-L-homoserine (OSHS) and hydrogen sulfide. Cannot use the other activated form of L-homoserine, O-acetyl-L-homoserine, as a substrate. The sequence is that of O-succinylhomoserine sulfhydrylase from Pseudomonas aeruginosa (strain ATCC 15692 / DSM 22644 / CIP 104116 / JCM 14847 / LMG 12228 / 1C / PRS 101 / PAO1).